Here is a 157-residue protein sequence, read N- to C-terminus: Large ribosomal subunit protein uL15 (157 aa).

A disordered region spans residues 1–41; that stretch reads MKLHELSDNPGATKKRKRVGRGPGSGTGKMGGRGIKGQKSR. Residues 21 to 35 show a composition bias toward gly residues; that stretch reads RGPGSGTGKMGGRGI.

This sequence belongs to the universal ribosomal protein uL15 family. Part of the 50S ribosomal subunit.

In terms of biological role, binds to the 23S rRNA. The polypeptide is Large ribosomal subunit protein uL15 (Jannaschia sp. (strain CCS1)).